The chain runs to 344 residues: DNA-directed RNA polymerase subunit alpha (344 aa).

The segment at 1–238 is alpha N-terminal domain (alpha-NTD); the sequence is MKVIKTAPLI…KQLGVFGERP (238 aa). The alpha C-terminal domain (alpha-CTD) stretch occupies residues 254–344; the sequence is AKDLSAKIES…EKLEDKGGND (91 aa).

It belongs to the RNA polymerase alpha chain family. In terms of assembly, homodimer. The RNAP catalytic core consists of 2 alpha, 1 beta, 1 beta' and 1 omega subunit. When a sigma factor is associated with the core the holoenzyme is formed, which can initiate transcription.

It carries out the reaction RNA(n) + a ribonucleoside 5'-triphosphate = RNA(n+1) + diphosphate. In terms of biological role, DNA-dependent RNA polymerase catalyzes the transcription of DNA into RNA using the four ribonucleoside triphosphates as substrates. The sequence is that of DNA-directed RNA polymerase subunit alpha from Helicobacter pylori (strain J99 / ATCC 700824) (Campylobacter pylori J99).